The chain runs to 280 residues: 2,3,4,5-tetrahydropyridine-2,6-dicarboxylate N-succinyltransferase (280 aa).

It belongs to the transferase hexapeptide repeat family.

The protein resides in the cytoplasm. It catalyses the reaction (S)-2,3,4,5-tetrahydrodipicolinate + succinyl-CoA + H2O = (S)-2-succinylamino-6-oxoheptanedioate + CoA. The protein operates within amino-acid biosynthesis; L-lysine biosynthesis via DAP pathway; LL-2,6-diaminopimelate from (S)-tetrahydrodipicolinate (succinylase route): step 1/3. The polypeptide is 2,3,4,5-tetrahydropyridine-2,6-dicarboxylate N-succinyltransferase (Methylorubrum populi (strain ATCC BAA-705 / NCIMB 13946 / BJ001) (Methylobacterium populi)).